The chain runs to 1793 residues: Brefeldin A-inhibited guanine nucleotide-exchange protein 2 (1793 aa).

At Ala2 the chain carries N-acetylalanine. Disordered regions lie at residues 45-71, 266-299, and 579-606; these read NSLQ…PGPL, TMSG…LLDS, and GSPQ…GGTS. The segment covering 55-66 has biased composition (low complexity); it reads SSAATDSESESS. The span at 270–281 shows a compositional bias: gly residues; the sequence is SGSGSGSGGQDG. Composition is skewed to polar residues over residues 284-294 and 594-605; these read GTTTVETTNPT and GSDTYSESSGGT. At Ser595 the chain carries Phosphoserine. The SEC7 domain occupies 610–797; that stretch reads AIEQRRAYKL…RSLYERITKH (188 aa). Glu712 is a catalytic residue. Positions 1311–1327 are enriched in polar residues; the sequence is NKYKGTSGKIPQSSLHS. The interval 1311–1333 is disordered; that stretch reads NKYKGTSGKIPQSSLHSGKSGKQ.

In terms of assembly, homodimer.

The protein localises to the cytoplasm. The protein resides in the cytosol. It localises to the membrane. Its activity is regulated as follows. Inhibited by brefeldin A. Activates the ARF proteins by exchanging bound GDP for free GTP. Plays a role in vesicular protein sorting. This is Brefeldin A-inhibited guanine nucleotide-exchange protein 2 (BIG2) from Arabidopsis thaliana (Mouse-ear cress).